We begin with the raw amino-acid sequence, 324 residues long: tRNA U34 carboxymethyltransferase (324 aa).

Carboxy-S-adenosyl-L-methionine is bound by residues lysine 92, tryptophan 106, lysine 111, glycine 131, 153–155, methionine 197, tyrosine 201, and arginine 316; that span reads DPS.

This sequence belongs to the class I-like SAM-binding methyltransferase superfamily. CmoB family. As to quaternary structure, homotetramer.

The catalysed reaction is carboxy-S-adenosyl-L-methionine + 5-hydroxyuridine(34) in tRNA = 5-carboxymethoxyuridine(34) in tRNA + S-adenosyl-L-homocysteine + H(+). Catalyzes carboxymethyl transfer from carboxy-S-adenosyl-L-methionine (Cx-SAM) to 5-hydroxyuridine (ho5U) to form 5-carboxymethoxyuridine (cmo5U) at position 34 in tRNAs. This is tRNA U34 carboxymethyltransferase from Hahella chejuensis (strain KCTC 2396).